The primary structure comprises 292 residues: Putative gonadotropin-releasing hormone II receptor (292 aa).

Residues 1-28 (MSAGNGTPWDATWNITVQWLAVDIACRT) are Extracellular-facing. A disulfide bond links cysteine 26 and cysteine 101. A helical membrane pass occupies residues 29-49 (LMFLKLMATYSAAFLPVVIGL). Residues 50–67 (DRQAAVLNPLGSRSGVRK) are Cytoplasmic-facing. A helical transmembrane segment spans residues 68-88 (LLGAAWGLSFLLAFPQLFLFH). The Extracellular portion of the chain corresponds to 89-115 (TVHCAGPVPFTQCVTKGSFKAQWQETT). Residues 116 to 136 (YNLFTFCCLFLLPLTAMAICY) form a helical membrane-spanning segment. The Cytoplasmic segment spans residues 137 to 177 (SRIVLSVSRPQTRKGSHAPAGEFALPRSFDNCPRVRLRALR). A helical membrane pass occupies residues 178 to 198 (LALLILLTFILCWTPYYLLGM). The Extracellular segment spans residues 199 to 216 (WYWFSPTMLTEVPPSLSH). Residues 217-237 (ILFLLGLLNAPLDPLLYGAFT) form a helical membrane-spanning segment. Over 238–292 (LGCRRGHQELSIDSSKEGSGRMLQEEIHAFRQLEVQKTVTSRRAGETKGISITSI) the chain is Cytoplasmic.

Belongs to the G-protein coupled receptor 1 family. Post-translationally, phosphorylated on the C-terminal cytoplasmic tail. Expressed in many tissues.

Its subcellular location is the cell membrane. Its function is as follows. Putative receptor for gonadotropin releasing hormone II (GnRH II) which is most probably non-functional. The protein is Putative gonadotropin-releasing hormone II receptor (GNRHR2) of Homo sapiens (Human).